A 123-amino-acid chain; its full sequence is Putative membrane protein insertion efficiency factor (123 aa).

The interval 1–23 (MGSCGGKHTGKGAPKPYSRNFTD) is disordered.

The protein belongs to the UPF0161 family.

The protein localises to the cell inner membrane. Functionally, could be involved in insertion of integral membrane proteins into the membrane. In Brucella abortus (strain 2308), this protein is Putative membrane protein insertion efficiency factor.